A 416-amino-acid chain; its full sequence is Phosphoglycerate kinase (416 aa).

(2R)-3-phosphoglycerate-binding residues include Val-23, Asp-24, Phe-25, Asn-26, Asn-38, Arg-39, Ser-62, His-63, Gly-65, Arg-66, Leu-121, Arg-122, His-169, and Arg-170. An ADP-binding site is contributed by Gly-213. Residue Gly-213 participates in CDP binding. AMP is bound by residues Ala-214 and Lys-215. ATP-binding residues include Ala-214 and Lys-215. Position 214 (Ala-214) interacts with Mg(2+). Position 218 (Asp-218) interacts with CDP. A Mg(2+)-binding site is contributed by Asp-218. Lys-219 contributes to the AMP binding site. Lys-219 is an ATP binding site. ADP is bound at residue Gly-237. Gly-237 lines the CDP pocket. AMP-binding residues include Gly-238 and Gly-312. ATP contacts are provided by Gly-238 and Gly-312. 2 residues coordinate CDP: Gly-337 and Phe-342. Phe-342 contributes to the ADP binding site. Glu-343 lines the AMP pocket. Residue Asp-374 coordinates Mg(2+). An ATP-binding site is contributed by Thr-375.

The protein belongs to the phosphoglycerate kinase family. Monomer. Requires Mg(2+) as cofactor.

The enzyme catalyses (2R)-3-phosphoglycerate + ATP = (2R)-3-phospho-glyceroyl phosphate + ADP. It functions in the pathway carbohydrate degradation; glycolysis; pyruvate from D-glyceraldehyde 3-phosphate: step 2/5. The sequence is that of Phosphoglycerate kinase (PGK) from Plasmodium falciparum (isolate 3D7).